The following is a 396-amino-acid chain: Probable tRNA sulfurtransferase (396 aa).

The THUMP domain maps to 58-169 (NQFIEKLKMV…KKNIYVFTRS (112 aa)). Residues 187–188 (LL), 212–213 (YF), arginine 269, glycine 291, and glutamine 300 each bind ATP.

It belongs to the ThiI family.

It localises to the cytoplasm. The catalysed reaction is [ThiI sulfur-carrier protein]-S-sulfanyl-L-cysteine + a uridine in tRNA + 2 reduced [2Fe-2S]-[ferredoxin] + ATP + H(+) = [ThiI sulfur-carrier protein]-L-cysteine + a 4-thiouridine in tRNA + 2 oxidized [2Fe-2S]-[ferredoxin] + AMP + diphosphate. It catalyses the reaction [ThiS sulfur-carrier protein]-C-terminal Gly-Gly-AMP + S-sulfanyl-L-cysteinyl-[cysteine desulfurase] + AH2 = [ThiS sulfur-carrier protein]-C-terminal-Gly-aminoethanethioate + L-cysteinyl-[cysteine desulfurase] + A + AMP + 2 H(+). The protein operates within cofactor biosynthesis; thiamine diphosphate biosynthesis. In terms of biological role, catalyzes the ATP-dependent transfer of a sulfur to tRNA to produce 4-thiouridine in position 8 of tRNAs, which functions as a near-UV photosensor. Also catalyzes the transfer of sulfur to the sulfur carrier protein ThiS, forming ThiS-thiocarboxylate. This is a step in the synthesis of thiazole, in the thiamine biosynthesis pathway. The sulfur is donated as persulfide by IscS. The protein is Probable tRNA sulfurtransferase of Halothermothrix orenii (strain H 168 / OCM 544 / DSM 9562).